The chain runs to 402 residues: CCA-adding enzyme (402 aa).

Positions 32 and 35 each coordinate ATP. 2 residues coordinate CTP: G32 and R35. The Mg(2+) site is built by D45 and D47. 5 residues coordinate ATP: R116, D159, R162, R165, and R168. CTP is bound by residues R116, D159, R162, R165, and R168.

Belongs to the tRNA nucleotidyltransferase/poly(A) polymerase family. Bacterial CCA-adding enzyme type 3 subfamily. Homodimer. It depends on Mg(2+) as a cofactor.

The catalysed reaction is a tRNA precursor + 2 CTP + ATP = a tRNA with a 3' CCA end + 3 diphosphate. The enzyme catalyses a tRNA with a 3' CCA end + 2 CTP + ATP = a tRNA with a 3' CCACCA end + 3 diphosphate. In terms of biological role, catalyzes the addition and repair of the essential 3'-terminal CCA sequence in tRNAs without using a nucleic acid template. Adds these three nucleotides in the order of C, C, and A to the tRNA nucleotide-73, using CTP and ATP as substrates and producing inorganic pyrophosphate. tRNA 3'-terminal CCA addition is required both for tRNA processing and repair. Also involved in tRNA surveillance by mediating tandem CCA addition to generate a CCACCA at the 3' terminus of unstable tRNAs. While stable tRNAs receive only 3'-terminal CCA, unstable tRNAs are marked with CCACCA and rapidly degraded. The chain is CCA-adding enzyme from Streptococcus pyogenes serotype M2 (strain MGAS10270).